A 256-amino-acid chain; its full sequence is Tryptophan synthase alpha chain (256 aa).

Active-site proton acceptor residues include glutamate 48 and aspartate 59.

Belongs to the TrpA family. In terms of assembly, tetramer of two alpha and two beta chains.

It catalyses the reaction (1S,2R)-1-C-(indol-3-yl)glycerol 3-phosphate + L-serine = D-glyceraldehyde 3-phosphate + L-tryptophan + H2O. It participates in amino-acid biosynthesis; L-tryptophan biosynthesis; L-tryptophan from chorismate: step 5/5. Its function is as follows. The alpha subunit is responsible for the aldol cleavage of indoleglycerol phosphate to indole and glyceraldehyde 3-phosphate. In Caldicellulosiruptor bescii (strain ATCC BAA-1888 / DSM 6725 / KCTC 15123 / Z-1320) (Anaerocellum thermophilum), this protein is Tryptophan synthase alpha chain.